We begin with the raw amino-acid sequence, 414 residues long: MVDNIIDTDNYYAIVYTYKTIGLSKLYEHYIPEKDLINIRFSDTQVSLLQTCNRVELYLYTKDRNKINDILSKLNETHGKDISSNAIVLRGKDAINHLYQVASGLDSLAIGEYEILGQIKEALTSCKKHSLCNEEIELLFNAAIKVGRKVRSLTNISKGKVGIYSIAIQKSLEVMGDLTDIKIAIVGAGEIGSKLAFMLKNNGARNLTIFNRNLDRALELSNKFGYNAELLDFQKVNEYDLVFIAINNSNPSQLRLDKPKLVIDLSVPPVVYKTSNVIYLDDLRVISDNIILNKREDIKKAEAIINEEIQKFESLLNNYNMNRLVSRFMSEIEWVREKEVDRAFNEILKNYADKDNIKEIIDKMTYSLIKKVFSPILEDLRKDPNNKKQIVEYLIEVFQNGQFSDTKTQKIEKQ.

Substrate is bound by residues T51–R54, S107, E112–E114, and Q118. The active-site Nucleophile is the C52. G187–G192 provides a ligand contact to NADP(+).

Belongs to the glutamyl-tRNA reductase family. In terms of assembly, homodimer.

It catalyses the reaction (S)-4-amino-5-oxopentanoate + tRNA(Glu) + NADP(+) = L-glutamyl-tRNA(Glu) + NADPH + H(+). The protein operates within porphyrin-containing compound metabolism; protoporphyrin-IX biosynthesis; 5-aminolevulinate from L-glutamyl-tRNA(Glu): step 1/2. Functionally, catalyzes the NADPH-dependent reduction of glutamyl-tRNA(Glu) to glutamate 1-semialdehyde (GSA). This Sulfolobus acidocaldarius (strain ATCC 33909 / DSM 639 / JCM 8929 / NBRC 15157 / NCIMB 11770) protein is Glutamyl-tRNA reductase.